The chain runs to 917 residues: Probable dipeptidyl-aminopeptidase B (917 aa).

The disordered stretch occupies residues methionine 1 to tryptophan 75. At methionine 1–glutamine 93 the chain is on the cytoplasmic side. Positions aspartate 27–valine 39 are enriched in low complexity. Over residues aspartate 40 to proline 49 the composition is skewed to polar residues. Positions valine 57–aspartate 69 are enriched in basic and acidic residues. A helical; Signal-anchor for type II membrane protein transmembrane segment spans residues isoleucine 94–phenylalanine 114. Residues valine 115–arginine 917 lie on the Vacuolar side of the membrane. Residues threonine 124–proline 133 are compositionally biased toward polar residues. Residues threonine 124 to proline 150 are disordered. 3 N-linked (GlcNAc...) asparagine glycosylation sites follow: asparagine 206, asparagine 302, and asparagine 354. The Charge relay system role is filled by serine 759. Asparagine 818 is a glycosylation site (N-linked (GlcNAc...) asparagine). Residues aspartate 836 and histidine 869 each act as charge relay system in the active site.

It belongs to the peptidase S9B family.

It localises to the vacuole membrane. The enzyme catalyses Release of an N-terminal dipeptide, Xaa-Yaa-|-Zaa-, from a polypeptide, preferentially when Yaa is Pro, provided Zaa is neither Pro nor hydroxyproline.. Type IV dipeptidyl-peptidase which removes N-terminal dipeptides sequentially from polypeptides having unsubstituted N-termini provided that the penultimate residue is proline. In Arthroderma gypseum (strain ATCC MYA-4604 / CBS 118893) (Microsporum gypseum), this protein is Probable dipeptidyl-aminopeptidase B (DAPB).